The primary structure comprises 493 residues: Guanosine-5'-triphosphate,3'-diphosphate pyrophosphatase (493 aa).

The protein belongs to the GppA/Ppx family. GppA subfamily.

It carries out the reaction guanosine 3'-diphosphate 5'-triphosphate + H2O = guanosine 3',5'-bis(diphosphate) + phosphate + H(+). The protein operates within purine metabolism; ppGpp biosynthesis; ppGpp from GTP: step 2/2. Catalyzes the conversion of pppGpp to ppGpp. Guanosine pentaphosphate (pppGpp) is a cytoplasmic signaling molecule which together with ppGpp controls the 'stringent response', an adaptive process that allows bacteria to respond to amino acid starvation, resulting in the coordinated regulation of numerous cellular activities. This Salmonella gallinarum (strain 287/91 / NCTC 13346) protein is Guanosine-5'-triphosphate,3'-diphosphate pyrophosphatase.